The sequence spans 160 residues: Small ribosomal subunit protein uS7 (160 aa).

This sequence belongs to the universal ribosomal protein uS7 family. Part of the 30S ribosomal subunit. Contacts proteins S9 and S11.

In terms of biological role, one of the primary rRNA binding proteins, it binds directly to 16S rRNA where it nucleates assembly of the head domain of the 30S subunit. Is located at the subunit interface close to the decoding center, probably blocks exit of the E-site tRNA. This Anaplasma marginale (strain Florida) protein is Small ribosomal subunit protein uS7.